Here is a 584-residue protein sequence, read N- to C-terminus: 2-isopropylmalate synthase (584 aa).

In terms of domain architecture, Pyruvate carboxyltransferase spans 40–314 (PRWCAVDLRD…DPQIDFSDIE (275 aa)). The Mg(2+) site is built by D49, H253, H255, and N289. Residues 456–584 (SRDGSGSTWG…VRDAQEAAQD (129 aa)) form a regulatory domain region.

The protein belongs to the alpha-IPM synthase/homocitrate synthase family. LeuA type 2 subfamily. In terms of assembly, homodimer. Mg(2+) is required as a cofactor.

Its subcellular location is the cytoplasm. The enzyme catalyses 3-methyl-2-oxobutanoate + acetyl-CoA + H2O = (2S)-2-isopropylmalate + CoA + H(+). It functions in the pathway amino-acid biosynthesis; L-leucine biosynthesis; L-leucine from 3-methyl-2-oxobutanoate: step 1/4. In terms of biological role, catalyzes the condensation of the acetyl group of acetyl-CoA with 3-methyl-2-oxobutanoate (2-ketoisovalerate) to form 3-carboxy-3-hydroxy-4-methylpentanoate (2-isopropylmalate). The chain is 2-isopropylmalate synthase from Kocuria rhizophila (strain ATCC 9341 / DSM 348 / NBRC 103217 / DC2201).